Consider the following 906-residue polypeptide: Nuclear factor NF-kappa-B p100 subunit (906 aa).

Residues 34 to 223 form the RHD domain; the sequence is AVGPYLVIIE…DPIHDSKSPG (190 aa). A Nuclear localization signal motif is present at residues 336–340; that stretch reads RNRKK. The interval 345 to 374 is GRR; sequence FPQHFGGGSHMGGAGGAGGFGAGGGGNLSF. ANK repeat units lie at residues 472–501, 511–540, 544–573, 582–611, 616–646, and 650–679; these read NGDT…SIPS, LQQT…NPTL, YGNS…SATP, QGLL…DVNG, GGRT…NVNS, and AGNT…DVQR. 2 disordered regions span residues 677–734 and 857–906; these read VQRE…GPRQ and EPLE…QQVH. A compositionally biased stretch (low complexity) spans 684–695; it reads PVSPSSVRVPSS. Acidic residues predominate over residues 697–708; it reads TDGDPEEQEQEQ. One can recognise a Death domain in the interval 771-857; that stretch reads RNHLLSLDTD…GAVRMLRKPE (87 aa).

In terms of assembly, component of the NF-kappa-B RelB-p52 complex. In terms of processing, while translation occurs, the particular unfolded structure after the GRR repeat promotes the generation of p52 making it an acceptable substrate for the proteasome. This process is known as cotranslational processing. The processed form is active and the unprocessed form acts as an inhibitor (I kappa B-like), being able to form cytosolic complexes with NF-kappa B, trapping it in the cytoplasm. Complete folding of the region downstream of the GRR repeat precludes processing. Constitutive processing is tightly suppressed by its C-terminal processing inhibitory domain, named PID, which contains the death domain.

The protein localises to the nucleus. The protein resides in the cytoplasm. Functionally, NF-kappa-B is a pleiotropic transcription factor present in almost all cell types and is the endpoint of a series of signal transduction events that are initiated by a vast array of stimuli related to many biological processes such as inflammation, immunity, differentiation, cell growth, tumorigenesis and apoptosis. NF-kappa-B is a homo- or heterodimeric complex formed by the Rel-like domain-containing proteins RELA/p65, RELB, NFKB1/p105, NFKB1/p50, REL and NFKB2/p52. The dimers bind at kappa-B sites in the DNA of their target genes and the individual dimers have distinct preferences for different kappa-B sites that they can bind with distinguishable affinity and specificity. Different dimer combinations act as transcriptional activators or repressors, respectively. NF-kappa-B is controlled by various mechanisms of post-translational modification and subcellular compartmentalization as well as by interactions with other cofactors or corepressors. NF-kappa-B complexes are held in the cytoplasm in an inactive state complexed with members of the NF-kappa-B inhibitor (I-kappa-B) family. In a conventional activation pathway, I-kappa-B is phosphorylated by I-kappa-B kinases (IKKs) in response to different activators, subsequently degraded thus liberating the active NF-kappa-B complex which translocates to the nucleus. In a non-canonical activation pathway, the MAP3K14-activated CHUK/IKKA homodimer phosphorylates NFKB2/p100 associated with RelB, inducing its proteolytic processing to NFKB2/p52 and the formation of NF-kappa-B RelB-p52 complexes. The NF-kappa-B heterodimeric RelB-p52 complex is a transcriptional activator. NFKB2 appears to have dual functions such as cytoplasmic retention of attached NF-kappa-B proteins by p100 and generation of p52 by a cotranslational processing. The proteasome-mediated process ensures the production of both p52 and p100 and preserves their independent function. p52 binds to the kappa-B consensus sequence 5'-GGRNNYYCC-3', located in the enhancer region of genes involved in immune response and acute phase reactions. In concert with RELB, may play a role in the regulation of the circadian clock. The chain is Nuclear factor NF-kappa-B p100 subunit (NFKB2) from Gallus gallus (Chicken).